Reading from the N-terminus, the 393-residue chain is Phosphoglycerate kinase (393 aa).

Substrate is bound by residues 22-24 (DFN), R37, 60-63 (HLGR), R119, and R152. ATP contacts are provided by residues K202, G293, E324, and 350-353 (GGDS).

The protein belongs to the phosphoglycerate kinase family. As to quaternary structure, monomer.

The protein resides in the cytoplasm. The enzyme catalyses (2R)-3-phosphoglycerate + ATP = (2R)-3-phospho-glyceroyl phosphate + ADP. It functions in the pathway carbohydrate degradation; glycolysis; pyruvate from D-glyceraldehyde 3-phosphate: step 2/5. The chain is Phosphoglycerate kinase from Borrelia garinii subsp. bavariensis (strain ATCC BAA-2496 / DSM 23469 / PBi) (Borreliella bavariensis).